Consider the following 379-residue polypeptide: Copper-containing nitrite reductase (379 aa).

Positions 1–32 form a signal peptide, tat-type signal; the sequence is MSEQFRLTRRSMLAGAAVAGALAPVVTSVAHA. 2 Plastocyanin-like domains span residues 33-214 and 215-379; these read EGGG…YDKV and YYVG…PTSG. Residues histidine 134, histidine 139, histidine 174, cysteine 175, histidine 184, methionine 189, and histidine 345 each coordinate Cu cation.

Belongs to the multicopper oxidase family. In terms of assembly, homotrimer. It depends on Cu(2+) as a cofactor. Requires Cu(+) as cofactor. The cofactor is FAD. Post-translationally, predicted to be exported by the Tat system. The position of the signal peptide cleavage has not been experimentally proven.

It localises to the periplasm. The catalysed reaction is nitric oxide + Fe(III)-[cytochrome c] + H2O = Fe(II)-[cytochrome c] + nitrite + 2 H(+). The protein operates within nitrogen metabolism; nitrate reduction (denitrification); dinitrogen from nitrate: step 2/4. The chain is Copper-containing nitrite reductase (nirU) from Neorhizobium galegae (Rhizobium galegae).